Consider the following 815-residue polypeptide: Phenylalanine--tRNA ligase beta subunit (815 aa).

Residues 39 to 148 (ATELQKFEVA…EYAVVGDNFT (110 aa)) form the tRNA-binding domain. The B5 domain occupies 420 to 495 (LQKIPLDFSV…RIYGYDKIES (76 aa)). Mg(2+) is bound by residues Asp-473, Asp-479, Glu-482, and Glu-483. The 94-residue stretch at 721-814 (SDFQANFRDY…ISQKFQGTLR (94 aa)) folds into the FDX-ACB domain.

Belongs to the phenylalanyl-tRNA synthetase beta subunit family. Type 1 subfamily. In terms of assembly, tetramer of two alpha and two beta subunits. Mg(2+) serves as cofactor.

The protein localises to the cytoplasm. It catalyses the reaction tRNA(Phe) + L-phenylalanine + ATP = L-phenylalanyl-tRNA(Phe) + AMP + diphosphate + H(+). The protein is Phenylalanine--tRNA ligase beta subunit of Rickettsia typhi (strain ATCC VR-144 / Wilmington).